Reading from the N-terminus, the 1323-residue chain is Clustered mitochondria protein homolog (1323 aa).

One copy of the TPR 1 repeat lies at 103 to 141 (KEKPYNLAAIYDHLNKFREVIGLHFLDKYSSEVGVLSGV). The disordered stretch occupies residues 149-186 (LQDVKETEPETQDDKDKETDETKSTKEDSNQTEEKKSE). A compositionally biased stretch (basic and acidic residues) spans 150–186 (QDVKETEPETQDDKDKETDETKSTKEDSNQTEEKKSE). A Clu domain is found at 351-608 (FANQPDASRS…RATPLDIEFI (258 aa)). One copy of the TPR 2 repeat lies at 530–563 (CYGLSTDGSKIFSDSSFENVLKPIAEAFHLKPHP). Positions 764 to 801 (NEEEISKRKEESEKKATEGKDQDKEEEKANDNEKNKED) are enriched in basic and acidic residues. Residues 764–808 (NEEEISKRKEESEKKATEGKDQDKEEEKANDNEKNKEDDKEEVSN) form a disordered region. 4 TPR repeats span residues 1042–1076 (LSVY…KSEA), 1099–1132 (ITAY…WTLV), 1141–1174 (VNTY…STKL), and 1183–1216 (GMLR…FTKF). A disordered region spans residues 1250-1323 (KALAQQASAS…KKSNNKKSKK (74 aa)). Positions 1308–1323 (PKKQLKKKSNNKKSKK) are enriched in basic residues.

Belongs to the CLU family. May associate with the eukaryotic translation initiation factor 3 (eIF-3) complex.

It localises to the cytoplasm. In terms of biological role, mRNA-binding protein involved in proper cytoplasmic distribution of mitochondria. The sequence is that of Clustered mitochondria protein homolog from Debaryomyces hansenii (strain ATCC 36239 / CBS 767 / BCRC 21394 / JCM 1990 / NBRC 0083 / IGC 2968) (Yeast).